The sequence spans 174 residues: Large ribosomal subunit protein uL10 (174 aa).

Belongs to the universal ribosomal protein uL10 family. As to quaternary structure, part of the ribosomal stalk of the 50S ribosomal subunit. The N-terminus interacts with L11 and the large rRNA to form the base of the stalk. The C-terminus forms an elongated spine to which L12 dimers bind in a sequential fashion forming a multimeric L10(L12)X complex.

In terms of biological role, forms part of the ribosomal stalk, playing a central role in the interaction of the ribosome with GTP-bound translation factors. This is Large ribosomal subunit protein uL10 from Geobacter metallireducens (strain ATCC 53774 / DSM 7210 / GS-15).